We begin with the raw amino-acid sequence, 1046 residues long: UDP-N-acetylglucosamine--peptide N-acetylglucosaminyltransferase 110 kDa subunit (1046 aa).

Residue A2 is modified to N-acetylalanine. S3 and S4 each carry phosphoserine; by GSK3-beta; alternate. S3 and S4 each carry an O-linked (GlcNAc) serine; alternate glycan. D10 is a glycosylation site (O-linked (GlcNAc) serine). T12 carries an O-linked (GlcNAc) threonine glycan. Residue M18 is glycosylated (O-linked (GlcNAc) serine). S20 carries the phosphoserine modification. Residues 21–54 (FQGLAELAHREYQAGDFEAAERHCMQLWRQEPDN) form a TPR 1 repeat. An O-linked (GlcNAc) threonine glycan is attached at E38. P52 and G56 each carry an O-linked (GlcNAc) serine glycan. 11 TPR repeats span residues 89 to 122 (AEAYSNLGNVYKERGQLQEAIEHYRHALRLKPDF), 123 to 156 (IDGYINLAAALVAAGDMEGAVQAYVSALQYNPDL), 157 to 190 (YCVRSDLGNLLKALGRLEEAKACYLKAIETQPNF), 191 to 224 (AVAWSNLGCVFNAQGEIWLAIHHFEKAVTLDPNF), 225 to 258 (LDAYINLGNVLKEARIFDRAVAAYLRALSLSPNH), 259 to 292 (AVVHGNLACVYYEQGLIDLAIDTYRRAIELQPHF), 293 to 326 (PDAYCNLANALKEKGSVAEAEDCYNTALRLCPTH), 327 to 360 (ADSLNNLANIKREQGNIEEAVRLYRKALEVFPEF), 361 to 394 (AAAHSNLASVLQQQGKLQEALMHYKEAIRISPTF), 395 to 428 (ADAYSNMGNTLKEMQDVQGALQCYTRAIQINPAF), and 429 to 462 (ADAHSNLASIHKDSGNIPEAIASYRTALKLKPDF). The O-linked (GlcNAc) serine; by autocatalysis glycan is linked to S399. Phosphothreonine; by AMPK is present on T454. Residues 463-473 (PDAYCNLAHCL) form a TPR 13; truncated repeat. Residues 464 to 466 (DAY) carry the DFP motif motif. The short motif at 487–503 (KKLVSIVADQLEKNRLP) is the Nuclear localization signal element. The active-site Proton acceptor is H508. UDP is bound by residues Q849, K852, 906-908 (APK), 911-914 (HVRR), 930-932 (HTT), and D935. Position 989 is a phosphotyrosine (Y989). Positions 991-1010 (KKVRGKVWKQRISSPLFNTK) are required for phosphatidylinositol 3,4,5-triphosphate binding.

It belongs to the glycosyltransferase 41 family. O-GlcNAc transferase subfamily. As to quaternary structure, monomer; may exist in different oligomerization states in cells. Homotrimer, oligomerizes via TPR repeats 6 and 7. Trimerization is not necessary for activity in vitro, however it increases affinity for UDP-GlcNAc. Component of a THAP1/THAP3-HCFC1-OGT complex. Component of the NSL complex at least composed of MOF/KAT8, KANSL1, KANSL2, KANSL3, MCRS1, PHF20, OGT1/OGT, WDR5 and HCFC1. Found in a complex with KIF5B, RHOT1, RHOT2 and TRAK1. Found in a complex composed of at least SINHCAF, SIN3A, HDAC1, SAP30, RBBP4, OGT and TET1. Component of a complex composed of KMT2E/MLL5 (isoform 3), OGT (isoform 1) and USP7; the complex stabilizes KMT2E/MLL5, preventing KMT2E/MLL5 ubiquitination and proteasomal-mediated degradation. Interacts (via TPRs 1-6) with SIN3A; the interaction mediates transcriptional repression in parallel with histone deacetylase. Interacts (via TPR 5-6) with TET1, TET2 and TET3. Interacts (via TPR repeats 6 and 7) with ATXN10. Interacts with NSD2. Interacts with PROSER1; this interaction mediates TET2 O-GlcNAcylation and stability by promoting the interaction between OGT and TET2. Interacts with USP7. In terms of assembly, (Microbial infection) Interacts with human T-cell leukemia virus 1/HTLV-1 protein Tax; this interaction increases Tax interacting partner CREB1 O-GlcNAcylation. Post-translationally, ubiquitinated by the SCF(FBXO31) complex, leading to its proteasomal degradation. Phosphorylation on Ser-3 or Ser-4 by GSK3-beta positively regulates its activity. Phosphorylation at Thr-454 by AMPK promotes nuclear localization. In terms of processing, glycosylated via autocatalysis; O-GlcNAcylation at Ser-399 promotes nuclear localization. Post-translationally, glycosylated via autocatalysis; does not affect the enzyme activity but regulates substrate selectivity. Highly expressed in pancreas and to a lesser extent in skeletal muscle, heart, brain and placenta. Present in trace amounts in lung and liver.

The protein localises to the nucleus. Its subcellular location is the cytoplasm. It localises to the mitochondrion. It is found in the membrane. The protein resides in the cell membrane. The protein localises to the mitochondrion membrane. Its subcellular location is the cell projection. The catalysed reaction is L-seryl-[protein] + UDP-N-acetyl-alpha-D-glucosamine = 3-O-(N-acetyl-beta-D-glucosaminyl)-L-seryl-[protein] + UDP + H(+). The enzyme catalyses L-threonyl-[protein] + UDP-N-acetyl-alpha-D-glucosamine = 3-O-(N-acetyl-beta-D-glucosaminyl)-L-threonyl-[protein] + UDP + H(+). Its pathway is protein modification; protein glycosylation. Its activity is regulated as follows. Subject to product inhibition by UDP. Catalyzes the transfer of a single N-acetylglucosamine from UDP-GlcNAc to a serine or threonine residue in cytoplasmic and nuclear proteins resulting in their modification with a beta-linked N-acetylglucosamine (O-GlcNAc). Glycosylates a large and diverse number of proteins including histone H2B, AKT1, AMPK, ATG4B, CAPRIN1, EZH2, FNIP1, GSDMD, KRT7, LMNA, LMNB1, LMNB2, RPTOR, HOXA1, PFKL, KMT2E/MLL5, MAPT/TAU, TET2, RBL2, RET, NOD2 and HCFC1. Can regulate their cellular processes via cross-talk between glycosylation and phosphorylation or by affecting proteolytic processing. Involved in insulin resistance in muscle and adipocyte cells via glycosylating insulin signaling components and inhibiting the 'Thr-308' phosphorylation of AKT1, enhancing IRS1 phosphorylation and attenuating insulin signaling. Involved in glycolysis regulation by mediating glycosylation of 6-phosphofructokinase PFKL, inhibiting its activity. Plays a key role in chromatin structure by mediating O-GlcNAcylation of 'Ser-112' of histone H2B: recruited to CpG-rich transcription start sites of active genes via its interaction with TET proteins (TET1, TET2 or TET3). As part of the NSL complex indirectly involved in acetylation of nucleosomal histone H4 on several lysine residues. O-GlcNAcylation of 'Ser-75' of EZH2 increases its stability, and facilitating the formation of H3K27me3 by the PRC2/EED-EZH2 complex. Stabilizes KMT2E/MLL5 by mediating its glycosylation, thereby preventing KMT2E/MLL5 ubiquitination. Regulates circadian oscillation of the clock genes and glucose homeostasis in the liver. Stabilizes clock proteins BMAL1 and CLOCK through O-glycosylation, which prevents their ubiquitination and subsequent degradation. Promotes the CLOCK-BMAL1-mediated transcription of genes in the negative loop of the circadian clock such as PER1/2 and CRY1/2. O-glycosylates HCFC1 and regulates its proteolytic processing and transcriptional activity. Component of a THAP1/THAP3-HCFC1-OGT complex that is required for the regulation of the transcriptional activity of RRM1. Regulates mitochondrial motility in neurons by mediating glycosylation of TRAK1. Promotes autophagy by mediating O-glycosylation of ATG4B. Acts as a regulator of mTORC1 signaling by mediating O-glycosylation of RPTOR and FNIP1: O-GlcNAcylation of RPTOR in response to glucose sufficiency promotes activation of the mTORC1 complex. Its function is as follows. The mitochondrial isoform (mOGT) is cytotoxic and triggers apoptosis in several cell types including INS1, an insulinoma cell line. In terms of biological role, has N-acetylglucosaminyltransferase activity: glycosylates proteins, such as HNRNPU, NEUROD1, NUP62 and PDCD6IP. Displays specific substrate selectivity compared to other isoforms. The protein is UDP-N-acetylglucosamine--peptide N-acetylglucosaminyltransferase 110 kDa subunit of Homo sapiens (Human).